We begin with the raw amino-acid sequence, 271 residues long: Phosphatidylglycerol--prolipoprotein diacylglyceryl transferase (271 aa).

7 consecutive transmembrane segments (helical) span residues 21 to 41, 60 to 80, 95 to 115, 124 to 144, 177 to 197, 203 to 223, and 236 to 256; these read LAVR…MWLA, LLFA…VIFY, VWTG…AMFW, FFGV…MGRI, QLYE…WFIG, GSVS…VEYV, and FISM…LMMV. Arg-143 serves as a coordination point for a 1,2-diacyl-sn-glycero-3-phospho-(1'-sn-glycerol).

Belongs to the Lgt family.

It localises to the cell inner membrane. The catalysed reaction is L-cysteinyl-[prolipoprotein] + a 1,2-diacyl-sn-glycero-3-phospho-(1'-sn-glycerol) = an S-1,2-diacyl-sn-glyceryl-L-cysteinyl-[prolipoprotein] + sn-glycerol 1-phosphate + H(+). It functions in the pathway protein modification; lipoprotein biosynthesis (diacylglyceryl transfer). Functionally, catalyzes the transfer of the diacylglyceryl group from phosphatidylglycerol to the sulfhydryl group of the N-terminal cysteine of a prolipoprotein, the first step in the formation of mature lipoproteins. The protein is Phosphatidylglycerol--prolipoprotein diacylglyceryl transferase of Vibrio cholerae serotype O1 (strain ATCC 39541 / Classical Ogawa 395 / O395).